The chain runs to 947 residues: Translation initiation factor IF-2 (947 aa).

A disordered region spans residues 47 to 332 (LRESFGGGKS…RGRKSKRAKR (286 aa)). Over residues 86 to 95 (APDRSLDAAL) the composition is skewed to basic and acidic residues. Pro residues predominate over residues 105–123 (APVPAPAPAPTPAPAPAPA). Residues 131 to 145 (APPAATPAAPAASAA) show a composition bias toward low complexity. Composition is skewed to pro residues over residues 146–171 (PAPP…PQAP) and 210–225 (PRPQ…PGAP). Over residues 255–318 (RPGGGRPGGP…GAAGAFGRPG (64 aa)) the composition is skewed to gly residues. Basic residues predominate over residues 322 to 331 (RRGRKSKRAK). Positions 443-614 (TRPPVVTVMG…AVLLTADAAL (172 aa)) constitute a tr-type G domain. Residues 452–459 (GHVDHGKT) are G1. 452-459 (GHVDHGKT) contacts GTP. Residues 477–481 (GITQH) are G2. A G3 region spans residues 502 to 505 (DTPG). GTP-binding positions include 502–506 (DTPGH) and 556–559 (NKID). The interval 556–559 (NKID) is G4. Positions 592–594 (SAK) are G5.

This sequence belongs to the TRAFAC class translation factor GTPase superfamily. Classic translation factor GTPase family. IF-2 subfamily.

Its subcellular location is the cytoplasm. In terms of biological role, one of the essential components for the initiation of protein synthesis. Protects formylmethionyl-tRNA from spontaneous hydrolysis and promotes its binding to the 30S ribosomal subunits. Also involved in the hydrolysis of GTP during the formation of the 70S ribosomal complex. The protein is Translation initiation factor IF-2 of Mycobacterium marinum (strain ATCC BAA-535 / M).